The primary structure comprises 467 residues: ATP-dependent protease ATPase subunit HslU (467 aa).

ATP-binding positions include valine 20, 62–67 (GVGKTE), aspartate 280, glutamate 345, and arginine 417.

Belongs to the ClpX chaperone family. HslU subfamily. As to quaternary structure, a double ring-shaped homohexamer of HslV is capped on each side by a ring-shaped HslU homohexamer. The assembly of the HslU/HslV complex is dependent on binding of ATP.

Its subcellular location is the cytoplasm. Functionally, ATPase subunit of a proteasome-like degradation complex; this subunit has chaperone activity. The binding of ATP and its subsequent hydrolysis by HslU are essential for unfolding of protein substrates subsequently hydrolyzed by HslV. HslU recognizes the N-terminal part of its protein substrates and unfolds these before they are guided to HslV for hydrolysis. This Enterococcus faecalis (strain ATCC 700802 / V583) protein is ATP-dependent protease ATPase subunit HslU.